A 269-amino-acid chain; its full sequence is Subtilisin BL (269 aa).

Gln-2 is a binding site for Ca(2+). Positions 5–268 constitute a Peptidase S8 domain; that stretch reads PWGISRVQAP…SGLVNAEAAT (264 aa). Asp-32 serves as the catalytic Charge relay system. A Ca(2+)-binding site is contributed by Asp-40. The active-site Charge relay system is His-62. Residues Leu-73, Asn-75, Ile-77, Val-79, Ala-163, Tyr-165, and Ala-168 each contribute to the Ca(2+) site. The active-site Charge relay system is Ser-215.

The protein belongs to the peptidase S8 family. The cofactor is Ca(2+).

The protein resides in the secreted. It catalyses the reaction Hydrolysis of proteins with broad specificity for peptide bonds, and a preference for a large uncharged residue in P1. Hydrolyzes peptide amides.. Its function is as follows. Subtilisin is an extracellular alkaline serine protease, it catalyzes the hydrolysis of proteins and peptide amides. This chain is Subtilisin BL, found in Lederbergia lenta (Bacillus lentus).